Consider the following 702-residue polypeptide: MPRQIELDKVRNIGIIAHIDAGKTTTTERILFYTGRTYKIGEVHEGTATMDWMPQEQERGITITAAATTAPWRLNGVEYRINIIDTPGHVDFTVEVERSLRVLDGGIVVFDGVAGVEPQSETVWRQADKYNVPRICFVNKMDRVGASFERCVQMIKDRLGAKPAVVQLPIGVEDTFRGTIDLFTMKATIYYDDLGKDIREEEIPAELRPAAEKARNELIEMIAETDDELTLLYLEGQELTVEELKRGLRKATIERKLVPVLCGAALRNKGVQKLLDAVVEYLPSPLDRPAITGTLPGQVMGDEGVEVITRRVSDDEPFTALVFKIVADPYVGKLAYFRVYAGKITKGSYVLNSTRGQRERLGRLLRMHANHREDIDEVYAGEIAAMVGPKNSYTGDTICDPDHPIVLESIRFPEPVIEMAIEPKTKADQDKMSIALSRLAEEDPTFRVYTDQETGQTIIKGMGELHLEVIVDRMRREYKVEANQGKPQVSYRETITVPVDQESRFVRQTGGKGQYGHVKIKFEPLPPGKGFEFVNAIVGGVIPKEYIPAVEQGLREAMQTGVIAGYPVVDLKATLYDGSYHEVDSSEMAFKIAASMCLKEAVRRGKPQLLEPIMKVETVTPEEFLGTVIGDFNSRRGRIEGIEARGNAQVVRAFVPLANMFGYMTDLRSATQGRATASMEFDHYEPLPEALAKEIIEKRSAN.

One can recognise a tr-type G domain in the interval 8 to 286 (DKVRNIGIIA…AVVEYLPSPL (279 aa)). GTP-binding positions include 17–24 (AHIDAGKT), 85–89 (DTPGH), and 139–142 (NKMD).

This sequence belongs to the TRAFAC class translation factor GTPase superfamily. Classic translation factor GTPase family. EF-G/EF-2 subfamily.

It is found in the cytoplasm. Catalyzes the GTP-dependent ribosomal translocation step during translation elongation. During this step, the ribosome changes from the pre-translocational (PRE) to the post-translocational (POST) state as the newly formed A-site-bound peptidyl-tRNA and P-site-bound deacylated tRNA move to the P and E sites, respectively. Catalyzes the coordinated movement of the two tRNA molecules, the mRNA and conformational changes in the ribosome. This chain is Elongation factor G, found in Chloroflexus aggregans (strain MD-66 / DSM 9485).